A 155-amino-acid chain; its full sequence is uncharacterized protein (155 aa).

It belongs to the IIV-6 145L family.

This is an uncharacterized protein from Acheta domesticus (House cricket).